The primary structure comprises 445 residues: MREIVHIQAGQCGNQIGAKFWEVISDEHGIDPTGSYHGDSDLQLERINVYYNEATGNKYVPRAILVDLEPGTMDSVRSGPFGQIFRPDNFVFGQSGAGNNWAKGHYTEGAELVDSVLDVVRKESESCDCLQGFQLTHSLGGGTGSGMGTLLISKIREEYPDRIMNTFSVMPSPKVSDTVVEPYNATLSVHQLVENTDETYCIDNEALYDICFRTLKLTTPTYGDLNHLVSATMSGVTTCLRFPGQLNADLRKLAVNMVPFPRLHFFMPGFAPLTSRGSQQYRALTVPELTQQMFDSKNMMAACDPRHGRYLTVAAIFRGRMSMKEVDEQMLNVQNKNSSYFVEWIPNNVKTAVCDIPPRGLKMSATFIGNSTAIQELFKRISEQFTAMFRRKAFLHWYTGEGMDEMEFTEAESNMNDLVSEYQQYQDATADEQGEFEEEEGEDEA.

Positions M1 to I4 match the MREI motif motif. Position 11 (Q11) interacts with GTP. S40 carries the phosphoserine modification. T55 bears the Phosphothreonine mark. Residue K58 is modified to N6-acetyllysine; alternate. N6-succinyllysine; alternate is present on K58. A Glycyl lysine isopeptide (Lys-Gly) (interchain with G-Cter in ubiquitin); alternate cross-link involves residue K58. GTP-binding residues include E69, S138, G142, T143, and G144. E69 serves as a coordination point for Mg(2+). Residue S172 is modified to Phosphoserine; by CDK1. N204 and N226 together coordinate GTP. Phosphothreonine occurs at positions 285 and 290. An Omega-N-methylarginine modification is found at R318. K324 is covalently cross-linked (Glycyl lysine isopeptide (Lys-Gly) (interchain with G-Cter in ubiquitin)). The tract at residues Y422–A445 is disordered. Residues T429 to A445 show a composition bias toward acidic residues. A 5-glutamyl polyglutamate modification is found at E438.

Belongs to the tubulin family. In terms of assembly, dimer of alpha and beta chains. A typical microtubule is a hollow water-filled tube with an outer diameter of 25 nm and an inner diameter of 15 nM. Alpha-beta heterodimers associate head-to-tail to form protofilaments running lengthwise along the microtubule wall with the beta-tubulin subunit facing the microtubule plus end conferring a structural polarity. Microtubules usually have 13 protofilaments but different protofilament numbers can be found in some organisms and specialized cells. It depends on Mg(2+) as a cofactor. Post-translationally, some glutamate residues at the C-terminus are polyglycylated, resulting in polyglycine chains on the gamma-carboxyl group. Glycylation is mainly limited to tubulin incorporated into axonemes (cilia and flagella) whereas glutamylation is prevalent in neuronal cells, centrioles, axonemes, and the mitotic spindle. Both modifications can coexist on the same protein on adjacent residues, and lowering polyglycylation levels increases polyglutamylation, and reciprocally. The precise function of polyglycylation is still unclear. In terms of processing, some glutamate residues at the C-terminus are polyglutamylated, resulting in polyglutamate chains on the gamma-carboxyl group. Polyglutamylation plays a key role in microtubule severing by spastin (SPAST). SPAST preferentially recognizes and acts on microtubules decorated with short polyglutamate tails: severing activity by SPAST increases as the number of glutamates per tubulin rises from one to eight, but decreases beyond this glutamylation threshold. Phosphorylated on Ser-172 by CDK1 during the cell cycle, from metaphase to telophase, but not in interphase. This phosphorylation inhibits tubulin incorporation into microtubules.

It localises to the cytoplasm. The protein resides in the cytoskeleton. In terms of biological role, tubulin is the major constituent of microtubules, a cylinder consisting of laterally associated linear protofilaments composed of alpha- and beta-tubulin heterodimers. Microtubules grow by the addition of GTP-tubulin dimers to the microtubule end, where a stabilizing cap forms. Below the cap, tubulin dimers are in GDP-bound state, owing to GTPase activity of alpha-tubulin. Implicated in neuronal migration. The protein is Tubulin beta-2B chain (TUBB2B) of Bos taurus (Bovine).